The following is a 1746-amino-acid chain: tRNA (32-2'-O)-methyltransferase regulator THADA (1746 aa).

A coiled-coil region spans residues 1252–1286; sequence EQALAEIRRIVVELKALQLRLKNTEAANTKLNTNV.

It belongs to the THADA family. Interacts with SERCA. Detected in the larval fat body, salivary glands and wing imaginal disks (at protein level).

The protein localises to the endoplasmic reticulum. Its function is as follows. Together with methyltransferase Trm7-32, methylates the 2'-O-ribose of nucleotides at position 32 of the anticodon loop of substrate tRNAs. Plays a key role in energy homeostasis by regulating the balance between energy storage and heat production. Functions by negatively regulating Ca(2+) signaling pathways that are involved in heat production and maintaining correct lipid storage in the fat body. Regulates Ca(2+) signaling pathways by reducing the activity of the calcium-transporting ATPase SERCA possibly by promoting uncoupling of SERCA ATP hydrolysis from calcium pumping. May also function in the nervous system to control feeding behavior. In Drosophila melanogaster (Fruit fly), this protein is tRNA (32-2'-O)-methyltransferase regulator THADA.